The primary structure comprises 77 residues: MAKAAKAPASFETALAQLEDIIQAMDSGDMPLETALASYKQGTELIKFCQGKLADAEQQLKILENNELKTLDLPNGQ.

It belongs to the XseB family. As to quaternary structure, heterooligomer composed of large and small subunits.

It localises to the cytoplasm. It catalyses the reaction Exonucleolytic cleavage in either 5'- to 3'- or 3'- to 5'-direction to yield nucleoside 5'-phosphates.. In terms of biological role, bidirectionally degrades single-stranded DNA into large acid-insoluble oligonucleotides, which are then degraded further into small acid-soluble oligonucleotides. The sequence is that of Exodeoxyribonuclease 7 small subunit from Chromobacterium violaceum (strain ATCC 12472 / DSM 30191 / JCM 1249 / CCUG 213 / NBRC 12614 / NCIMB 9131 / NCTC 9757 / MK).